A 1096-amino-acid chain; its full sequence is Protein transport protein SEC24 B (1096 aa).

Positions 1–315 (MAAPVPPGAY…SAPGTPGSIY (315 aa)) are disordered. Residues 12-23 (PNNNQQNSGGPP) show a composition bias toward low complexity. Positions 27–45 (PGSQGNPNSLAANMQNLNI) are enriched in polar residues. Residues 47–64 (RPPPPMPGSGPRPSPPFG) show a composition bias toward pro residues. Residues 65–78 (QSPQSFPQQQQQQP) show a composition bias toward low complexity. Residues 79-92 (RPSPMARPGPPPPA) show a composition bias toward pro residues. Residues 93 to 107 (AMARPGGPPQVSQPG) are compositionally biased toward low complexity. Pro residues predominate over residues 108–122 (GFPPVGRPVAPPSNQ). A compositionally biased stretch (low complexity) spans 140–149 (SFPQPGGFPA). Pro residues-rich tracts occupy residues 150 to 160 (SGPPGGVPSGP), 171 to 186 (SPPP…PPSG), 246 to 258 (MAPP…PPNA), and 287 to 303 (GRPP…PPQQ). 4 residues coordinate Zn(2+): Cys-433, Cys-436, Cys-455, and Cys-458. Residues 433-458 (CSRCKGYVNPFMKFIDQGRKFICNLC) are zinc finger-like.

It belongs to the SEC23/SEC24 family. SEC24 subfamily. Component of the coat protein complex II (COPII), composed of at least five proteins: the Sec23/24 complex, the Sec13/31 complex and Sar1. Mainly expressed in pollen, roots, stems, petioles and hypocotyls, and, to a lower extent, in leaves and cotyledons.

Its subcellular location is the cytoplasmic vesicle. The protein localises to the COPII-coated vesicle membrane. It is found in the endoplasmic reticulum membrane. The protein resides in the golgi apparatus membrane. Its function is as follows. Component of the coat protein complex II (COPII), that covers ER-derived vesicles involved in transport from the endoplasmic reticulum to the Golgi apparatus. COPII is composed of at least five proteins: the SEC23/24 complex, the SEC13/31 complex, and the protein SAR1. Acts in the cytoplasm to promote the transport of secretory, plasma membrane, and vacuolar proteins from the endoplasmic reticulum to the Golgi complex. This Arabidopsis thaliana (Mouse-ear cress) protein is Protein transport protein SEC24 B.